The sequence spans 154 residues: Putative NADPH-dependent 7-cyano-7-deazaguanine reductase (154 aa).

Aspartate 52 (proton donor) is an active-site residue. Substrate-binding positions include 67-69 and 86-87; these read VES and HE.

It belongs to the GTP cyclohydrolase I family. QueF type 1 subfamily.

It localises to the cytoplasm. The enzyme catalyses 7-aminomethyl-7-carbaguanine + 2 NADP(+) = 7-cyano-7-deazaguanine + 2 NADPH + 3 H(+). The protein operates within tRNA modification; tRNA-queuosine biosynthesis. Functionally, catalyzes the NADPH-dependent reduction of 7-cyano-7-deazaguanine (preQ0) to 7-aminomethyl-7-deazaguanine (preQ1). The polypeptide is Putative NADPH-dependent 7-cyano-7-deazaguanine reductase (Streptococcus pneumoniae (strain ATCC BAA-255 / R6)).